The primary structure comprises 202 residues: Imidazoleglycerol-phosphate dehydratase (202 aa).

The protein belongs to the imidazoleglycerol-phosphate dehydratase family.

Its subcellular location is the cytoplasm. The catalysed reaction is D-erythro-1-(imidazol-4-yl)glycerol 3-phosphate = 3-(imidazol-4-yl)-2-oxopropyl phosphate + H2O. The protein operates within amino-acid biosynthesis; L-histidine biosynthesis; L-histidine from 5-phospho-alpha-D-ribose 1-diphosphate: step 6/9. This Corynebacterium diphtheriae (strain ATCC 700971 / NCTC 13129 / Biotype gravis) protein is Imidazoleglycerol-phosphate dehydratase.